Consider the following 347-residue polypeptide: UDP-3-O-acylglucosamine N-acyltransferase 1 (347 aa).

H246 acts as the Proton acceptor in catalysis.

It belongs to the transferase hexapeptide repeat family. LpxD subfamily. Homotrimer.

The enzyme catalyses a UDP-3-O-[(3R)-3-hydroxyacyl]-alpha-D-glucosamine + a (3R)-hydroxyacyl-[ACP] = a UDP-2-N,3-O-bis[(3R)-3-hydroxyacyl]-alpha-D-glucosamine + holo-[ACP] + H(+). The protein operates within bacterial outer membrane biogenesis; LPS lipid A biosynthesis. Its function is as follows. Catalyzes the N-acylation of UDP-3-O-acylglucosamine using 3-hydroxyacyl-ACP as the acyl donor. Is involved in the biosynthesis of lipid A, a phosphorylated glycolipid that anchors the lipopolysaccharide to the outer membrane of the cell. The polypeptide is UDP-3-O-acylglucosamine N-acyltransferase 1 (Francisella tularensis subsp. holarctica (strain LVS)).